We begin with the raw amino-acid sequence, 48 residues long: ATP synthase protein 8 (48 aa).

Position 1 is an N-formylmethionine (M1). At 1-12 the chain is on the mitochondrial intermembrane side; it reads MPQLIPFFFLNQ. Residues 13–33 traverse the membrane as a helical segment; sequence LFYGYLALFALLVLVSWVILP. At 34–48 the chain is on the mitochondrial matrix side; the sequence is YLLQLQIVRLLITKL.

As to quaternary structure, F-type ATP synthases have 2 components, the catalytic core F(1) and the membrane-embedded component F(0), linked together by a central stalk and a peripheral stalk. The central stalk, also called rotor shaft, is often seen as part of F(1). The peripheral stalk is seen as part of F(0). F(0) contains the membrane channel next to the rotor. F-type ATP synthases form dimers but each monomer functions independently in ATP generation. The dimer consists of 18 different polypeptides: ATP1 (subunit alpha, part of F(1), 3 molecules per monomer), ATP2 (subunit beta, part of F(1), 3 molecules per monomer), ATP3 (subunit gamma, part of the central stalk), ATP4 (subunit b, part of the peripheral stalk), ATP5/OSCP (subunit 5/OSCP, part of the peripheral stalk), ATP6 (subunit a, part of the peripheral stalk), ATP7 (subunit d, part of the peripheral stalk), ATP8 (subunit 8, part of the peripheral stalk), OLI1 (subunit c, part of the rotor, 10 molecules per monomer), ATP14 (subunit h, part of the peripheral stalk), ATP15 (subunit epsilon, part of the central stalk), ATP16 (subunit delta, part of the central stalk), ATP17 (subunit f, part of the peripheral stalk), ATP18 (subunit i/j, part of the peripheral stalk). Dimer-specific subunits are ATP19 (subunit k, at interface between monomers), ATP20 (subunit g, at interface between monomers), TIM11 (subunit e, at interface between monomers). Also contains subunit L.

Its subcellular location is the mitochondrion inner membrane. In terms of biological role, mitochondrial membrane ATP synthase (F(1)F(0) ATP synthase or Complex V) produces ATP from ADP in the presence of a proton gradient across the membrane which is generated by electron transport complexes of the respiratory chain. F-type ATP synthases consist of two structural domains, F(1) - containing the extramembraneous catalytic core, and F(0) - containing the membrane proton channel, linked together by a central stalk and a peripheral stalk. During catalysis, ATP synthesis in the catalytic domain of F(1) is coupled via a rotary mechanism of the central stalk subunits to proton translocation. Part of the complex F(0) domain. Minor subunit located with subunit a/ATP6 in the membrane. This Pichia angusta (Yeast) protein is ATP synthase protein 8.